Consider the following 294-residue polypeptide: Nucleotide-binding protein DICTH_1001 (294 aa).

An ATP-binding site is contributed by 10-17 (GLSGAGKS). GTP is bound at residue 61–64 (DIRT).

It belongs to the RapZ-like family.

Its function is as follows. Displays ATPase and GTPase activities. In Dictyoglomus thermophilum (strain ATCC 35947 / DSM 3960 / H-6-12), this protein is Nucleotide-binding protein DICTH_1001.